We begin with the raw amino-acid sequence, 156 residues long: E3 ubiquitin-protein ligase RNF181 (156 aa).

An RING-type; atypical zinc finger spans residues 79–120; it reads CPVCLLEFEEGETVRQLPCEHLFHSACILPWLGKTNSCPLCR.

The protein belongs to the RNF181 family.

The catalysed reaction is S-ubiquitinyl-[E2 ubiquitin-conjugating enzyme]-L-cysteine + [acceptor protein]-L-lysine = [E2 ubiquitin-conjugating enzyme]-L-cysteine + N(6)-ubiquitinyl-[acceptor protein]-L-lysine.. It participates in protein modification; protein ubiquitination. E3 ubiquitin-protein ligase which accepts ubiquitin from an E2 ubiquitin-conjugating enzyme in the form of a thioester and then directly transfers the ubiquitin to targeted substrates. Catalyzes monoubiquitination of 26S proteasome subunit PSMC2/RPT1. The sequence is that of E3 ubiquitin-protein ligase RNF181 (rnf181) from Xenopus laevis (African clawed frog).